We begin with the raw amino-acid sequence, 418 residues long: Probable serine/threonine-protein kinase nek2 (418 aa).

Positions 4–264 constitute a Protein kinase domain; the sequence is YEILGALGKG…VNELLGYSFI (261 aa). Residues 10–18 and K33 each bind ATP; that span reads LGKGSFGVV. The active-site Proton acceptor is the D135. A coiled-coil region spans residues 278–363; sequence QGLKQMDEDL…SNLSLNCNNS (86 aa).

The protein belongs to the protein kinase superfamily. NEK Ser/Thr protein kinase family. NIMA subfamily.

The catalysed reaction is L-seryl-[protein] + ATP = O-phospho-L-seryl-[protein] + ADP + H(+). It catalyses the reaction L-threonyl-[protein] + ATP = O-phospho-L-threonyl-[protein] + ADP + H(+). Functionally, involved in centrosome biogenesis. Seems to be required for recruitment of centrosomal material and might be involved in de novo centrosome formation. This is Probable serine/threonine-protein kinase nek2 (nek2) from Dictyostelium discoideum (Social amoeba).